We begin with the raw amino-acid sequence, 881 residues long: Envelope glycoprotein gp160 (881 aa).

Residues 1–19 form the signal peptide; that stretch reads MGCLGNQLLIAILLLSVYG. Residues 20–696 lie on the Extracellular side of the membrane; that stretch reads IYCTQYVTVF…ASWIKYIQYG (677 aa). N37 is a glycosylation site (N-linked (GlcNAc...) asparagine; by host). A disulfide bridge links C44 with C57. N-linked (GlcNAc...) asparagine; by host glycosylation is found at N70, N114, N148, N158, N186, N200, N204, N214, N246, N249, N280, N286, N297, N308, N318, N373, and N379. 5 cysteine pairs are disulfide-bonded: C101-C222, C108-C213, C113-C170, C235-C265, and C245-C257. Residues 113–169 form a V1 region; the sequence is CNKSETDRWGLTKSSTTITTAAPTSAPVSEKIDMVNETSSCIAQNNCTGLEQEQMIS. The interval 170 to 213 is V2; that stretch reads CKFTMTGLKRDKTKEYNETWYSTDLVCEQGNSTDNESRCYMNHC. Residues 313-345 are V3; the sequence is CRRPGNKTVLPVTIMSGLVFHSQPINDRPKQAW. Cysteines 313 and 346 form a disulfide. Intrachain disulfides connect C397-C461 and C404-C434. The tract at residues 404–434 is V4; that stretch reads CKMNWFLNWVEDRDVTTQRPKERHRRNYVPC. Residues N462 and N478 are each glycosylated (N-linked (GlcNAc...) asparagine; by host). The interval 477–484 is V5; that stretch reads GNQTSITM. A fusion peptide region spans residues 528–548; sequence GVFVLGFLGFLATAGSAMGAA. Residues 591–607 form an immunosuppression region; the sequence is LQTRVTAIEKYLKDQAQ. Residues N627, N636, and N652 are each glycosylated (N-linked (GlcNAc...) asparagine; by host). Positions 636–668 form a coiled coil; that stretch reads NDTWQEWERKVDFLEENITALLEEAQIQQEKNM. The MPER; binding to GalCer stretch occupies residues 673–694; that stretch reads KLNSWDVFGNWFDLASWIKYIQ. Residues 697–717 traverse the membrane as a helical segment; sequence IYVVVGVILLRIVIYIVQMLA. Residues 718–881 lie on the Cytoplasmic side of the membrane; sequence KLRQGYRPVF…IRQGLELTLL (164 aa). The YXXV motif; contains endocytosis signal motif lies at 723-726; sequence YRPV. Residues 737–761 form a disordered region; sequence THTQQDPALPTREGKEGDGGEGGGN. Residue C789 is the site of S-palmitoyl cysteine; by host attachment. The Di-leucine internalization motif signature appears at 880-881; that stretch reads LL.

The mature envelope protein (Env) consists of a homotrimer of non-covalently associated gp120-gp41 heterodimers. The resulting complex protrudes from the virus surface as a spike. Interacts with host CD4 and CCR5. Gp120 also interacts with the C-type lectins CD209/DC-SIGN and CLEC4M/DC-SIGNR (collectively referred to as DC-SIGN(R)). In terms of assembly, the mature envelope protein (Env) consists of a homotrimer of non-covalently associated gp120-gp41 heterodimers. The resulting complex protrudes from the virus surface as a spike. In terms of processing, specific enzymatic cleavages in vivo yield mature proteins. Envelope glycoproteins are synthesized as an inactive precursor that is heavily N-glycosylated and processed likely by host cell furin in the Golgi to yield the mature SU and TM proteins. The cleavage site between SU and TM requires the minimal sequence [KR]-X-[KR]-R. Post-translationally, palmitoylation of the transmembrane protein and of Env polyprotein (prior to its proteolytic cleavage) is essential for their association with host cell membrane lipid rafts. Palmitoylation is therefore required for envelope trafficking to classical lipid rafts, but not for viral replication.

It is found in the virion membrane. Its subcellular location is the host cell membrane. The protein resides in the host endosome membrane. Functionally, the surface protein gp120 (SU) attaches the virus to the host lymphoid cell by binding to the primary receptor CD4. This interaction induces a structural rearrangement creating a high affinity binding site for a chemokine coreceptor like CCR5. This peculiar 2 stage receptor-interaction strategy allows gp120 to maintain the highly conserved coreceptor-binding site in a cryptic conformation, protected from neutralizing antibodies. These changes are transmitted to the transmembrane protein gp41 and are thought to activate its fusogenic potential by unmasking its fusion peptide. Surface protein gp120 (SU) may target the virus to gut-associated lymphoid tissue (GALT) by binding host ITGA4/ITGB7 (alpha-4/beta-7 integrins), a complex that mediates T-cell migration to the GALT. Interaction between gp120 and ITGA4/ITGB7 would allow the virus to enter GALT early in the infection, infecting and killing most of GALT's resting CD4+ T-cells. This T-cell depletion is believed to be the major insult to the host immune system leading to AIDS. In terms of biological role, the surface protein gp120 is a ligand for CD209/DC-SIGN and CLEC4M/DC-SIGNR, which are respectively found on dendritic cells (DCs), and on endothelial cells of liver sinusoids and lymph node sinuses. These interactions allow capture of viral particles at mucosal surfaces by these cells and subsequent transmission to permissive cells. DCs are professional antigen presenting cells, critical for host immunity by inducing specific immune responses against a broad variety of pathogens. They act as sentinels in various tissues where they take up antigen, process it, and present it to T-cells following migration to lymphoid organs. SIV subverts the migration properties of dendritic cells to gain access to CD4+ T-cells in lymph nodes. Virus transmission to permissive T-cells occurs either in trans (without DCs infection, through viral capture and transmission), or in cis (following DCs productive infection, through the usual CD4-gp120 interaction), thereby inducing a robust infection. In trans infection, bound virions remain infectious over days and it is proposed that they are not degraded, but protected in non-lysosomal acidic organelles within the DCs close to the cell membrane thus contributing to the viral infectious potential during DCs' migration from the periphery to the lymphoid tissues. On arrival at lymphoid tissues, intact virions recycle back to DCs' cell surface allowing virus transmission to CD4+ T-cells. Virion capture also seems to lead to MHC-II-restricted viral antigen presentation, and probably to the activation of SIV-specific CD4+ cells. Its function is as follows. The transmembrane protein gp41 (TM) acts as a class I viral fusion protein. Under the current model, the protein has at least 3 conformational states: pre-fusion native state, pre-hairpin intermediate state, and post-fusion hairpin state. During fusion of viral and target intracellular membranes, the coiled coil regions (heptad repeats) assume a trimer-of-hairpins structure, positioning the fusion peptide in close proximity to the C-terminal region of the ectodomain. The formation of this structure appears to drive apposition and subsequent fusion of viral and target cell membranes. Complete fusion occurs in host cell endosomes. The virus undergoes clathrin-dependent internalization long before endosomal fusion, thus minimizing the surface exposure of conserved viral epitopes during fusion and reducing the efficacy of inhibitors targeting these epitopes. Membranes fusion leads to delivery of the nucleocapsid into the cytoplasm. Functionally, the envelope glycoprotein gp160 precursor down-modulates cell surface CD4 antigen by interacting with it in the endoplasmic reticulum and blocking its transport to the cell surface. The gp120-gp41 heterodimer allows rapid transcytosis of the virus through CD4 negative cells such as simple epithelial monolayers of the intestinal, rectal and endocervical epithelial barriers. Both gp120 and gp41 specifically recognize glycosphingolipids galactosyl-ceramide (GalCer) or 3' sulfo-galactosyl-ceramide (GalS) present in the lipid rafts structures of epithelial cells. Binding to these alternative receptors allows the rapid transcytosis of the virus through the epithelial cells. This transcytotic vesicle-mediated transport of virions from the apical side to the basolateral side of the epithelial cells does not involve infection of the cells themselves. The chain is Envelope glycoprotein gp160 (env) from Cercopithecidae (Old World monkeys).